A 215-amino-acid polypeptide reads, in one-letter code: Large ribosomal subunit protein mL43 (215 aa).

The protein belongs to the mitochondrion-specific ribosomal protein mL43 family. Component of the mitochondrial large ribosomal subunit (mt-LSU). Mature mammalian 55S mitochondrial ribosomes consist of a small (28S) and a large (39S) subunit. The 28S small subunit contains a 12S ribosomal RNA (12S mt-rRNA) and 30 different proteins. The 39S large subunit contains a 16S rRNA (16S mt-rRNA), a copy of mitochondrial valine transfer RNA (mt-tRNA(Val)), which plays an integral structural role, and 52 different proteins. As to expression, high relative levels in skeletal muscle and testis. Lower levels of expression in the heart, brain, placenta, lung, liver, kidney, pancreas, spleen, thymus, prostate, ovary, small intestine, colon and leukocytes. Expression is coregulated with TWNK.

It is found in the mitochondrion. The sequence is that of Large ribosomal subunit protein mL43 (MRPL43) from Homo sapiens (Human).